Consider the following 240-residue polypeptide: Uridylate kinase (240 aa).

12-15 (KLSG) contacts ATP. The segment at 20 to 25 (GEQGFG) is involved in allosteric activation by GTP. UMP is bound at residue Gly-54. ATP is bound by residues Gly-55 and Arg-59. UMP-binding positions include Asp-74 and 135–142 (TGNPYFST). The ATP site is built by Asn-163, Tyr-169, and Asp-172.

Belongs to the UMP kinase family. In terms of assembly, homohexamer.

The protein localises to the cytoplasm. The enzyme catalyses UMP + ATP = UDP + ADP. The protein operates within pyrimidine metabolism; CTP biosynthesis via de novo pathway; UDP from UMP (UMPK route): step 1/1. Allosterically activated by GTP. Inhibited by UTP. In terms of biological role, catalyzes the reversible phosphorylation of UMP to UDP. The protein is Uridylate kinase of Bacillus anthracis.